Here is a 114-residue protein sequence, read N- to C-terminus: Lectin MVL (114 aa).

Repeat 1 spans residues 2-55 (ASYKVNIPAGPLWSNAEAQQVGPKIAAAHQGNFTGQWTTVVESAMSVVEVELQV). Residues 12–16 (PLWSN), Gln-20, and 36–44 (GQWTTVVES) contribute to the a carbohydrate site. The linker stretch occupies residues 56–60 (ENTGI). Residues 61–114 (HEFKTDVLAGPLWSNDEAQKLGPQIAASYGAEFTGQWRTIVEGVMSVIQIKYTF) form repeat 2. A carbohydrate contacts are provided by residues 71 to 75 (PLWSN), Gln-79, and 95 to 103 (GQWRTIVEG).

Homodimer.

The protein resides in the cytoplasm. Carbohydrate-binding protein that binds oligomannosides such as Man(6)GlcNAc(2) with sub-micromolar affinities. The specificity of MVL is unique in that its minimal target comprises the Man-alpha-(1-&gt;6)-Man-beta-(1-&gt;4)-GlcNAc-beta-(1-&gt;4)-GlcNAc tetrasaccharide core (Man(2)A) found in N-linked oligomannosides. Displays hemagglutininating activity on rabbit, horse and hen erythrocytes. This activity is inhibited by yeast mannan. Does not bind mono- and disaccharides. Inhibits HIV-1 envelope-mediated cell fusion at nanomolar concentrations through carbohydrate-mediated interactions with high-mannose residues on the surface of the HIV envelope glycoprotein gp120. Its function is as follows. Unexpectedly for a lectin, one of the 2 oligomannose binding sites of MVL can catalyze the cleavage of chitin fragments (such as chitotriose, i.e. GlcNAc(3) or GlcNAc-beta-(1-&gt;4)-GlcNAcbeta-(1-&gt;4)-GlcNAc, and chitotetraose, i.e. GlcNAc(4)) to GlcNAc. This weak beta-1,4-glycosidase activity is restricted to the C-terminal carbohydrate-binding site. Does not cleave Man(3)GlcNAc(2) or the tetrasaccharide Man(2)A. This is Lectin MVL (mvl) from Microcystis viridis (Polycystis viridis).